Reading from the N-terminus, the 126-residue chain is MATQAKVSAEDQALLNKFARSYQLQTQLKAECKEMKTLVENINEATDEVLLLDDEDSASIPCRIGSCFVHFNSDSLNEHLEAKKASTETVLAEKTNELETITAEMERIKKVLYGKFGDQINLDAEE.

It belongs to the prefoldin subunit beta family. Heterohexamer of two PFD-alpha type and four PFD-beta type subunits.

In terms of biological role, binds specifically to cytosolic chaperonin (c-CPN) and transfers target proteins to it. Binds to nascent polypeptide chain and promotes folding in an environment in which there are many competing pathways for nonnative proteins. Appears to play a non-essential role. The sequence is that of Probable prefoldin subunit 4 from Caenorhabditis briggsae.